A 379-amino-acid chain; its full sequence is GTP cyclohydrolase 1 type 2 homolog (379 aa).

A divalent metal cation is bound by residues His-64, His-65, Asp-103, His-333, and Glu-337.

This sequence belongs to the GTP cyclohydrolase I type 2/NIF3 family. In terms of assembly, homohexamer.

In Mycobacterium bovis (strain ATCC BAA-935 / AF2122/97), this protein is GTP cyclohydrolase 1 type 2 homolog.